The following is an 879-amino-acid chain: Phosphoenolpyruvate carboxylase (879 aa).

Active-site residues include H137 and K545.

The protein belongs to the PEPCase type 1 family. The cofactor is Mg(2+).

The enzyme catalyses oxaloacetate + phosphate = phosphoenolpyruvate + hydrogencarbonate. Its function is as follows. Forms oxaloacetate, a four-carbon dicarboxylic acid source for the tricarboxylic acid cycle. This is Phosphoenolpyruvate carboxylase from Yersinia enterocolitica serotype O:8 / biotype 1B (strain NCTC 13174 / 8081).